The chain runs to 363 residues: Sensor protein BasS (363 aa).

Residues 1–13 (MHFLRRPISLRQR) lie on the Cytoplasmic side of the membrane. Residues 14-34 (LILTIGAILLVFELISVFWLW) form a helical membrane-spanning segment. Residues 35 to 64 (HESTEQIQLFEQALRDNRNNDRHIMREIRE) lie on the Periplasmic side of the membrane. A helical transmembrane segment spans residues 65–88 (AVASLIVPGVFMVSLTLFICYQAV). Positions 89–141 (RRITRPLAELQKELEARTADNLTPIAIHSATLEIEAVVSALNDLVSRLTSTLD) constitute an HAMP domain. At 89–363 (RRITRPLAEL…KKDQYVANQI (275 aa)) the chain is on the cytoplasmic side. Positions 149 to 357 (DVAHELRTPL…RAWVRLKKDQ (209 aa)) constitute a Histidine kinase domain. His152 is subject to Phosphohistidine; by autocatalysis.

Post-translationally, autophosphorylated.

It localises to the cell inner membrane. It carries out the reaction ATP + protein L-histidine = ADP + protein N-phospho-L-histidine.. Functionally, member of the two-component regulatory system BasS/BasR Autophosphorylates and activates BasR by phosphorylation. The chain is Sensor protein BasS (basS) from Escherichia coli (strain K12).